Consider the following 341-residue polypeptide: S-adenosylmethionine:tRNA ribosyltransferase-isomerase (341 aa).

This sequence belongs to the QueA family. As to quaternary structure, monomer.

It is found in the cytoplasm. It catalyses the reaction 7-aminomethyl-7-carbaguanosine(34) in tRNA + S-adenosyl-L-methionine = epoxyqueuosine(34) in tRNA + adenine + L-methionine + 2 H(+). It functions in the pathway tRNA modification; tRNA-queuosine biosynthesis. Its function is as follows. Transfers and isomerizes the ribose moiety from AdoMet to the 7-aminomethyl group of 7-deazaguanine (preQ1-tRNA) to give epoxyqueuosine (oQ-tRNA). This is S-adenosylmethionine:tRNA ribosyltransferase-isomerase from Clostridioides difficile (strain 630) (Peptoclostridium difficile).